The sequence spans 63 residues: DNA-directed RNA polymerase 7 kDa subunit (63 aa).

It belongs to the poxviridae DNA-directed RNA polymerase 7 kDa subunit family. As to quaternary structure, the DNA-dependent RNA polymerase used for intermediate and late genes expression consists of eight subunits 147 kDa, 133 kDa, 35 kDa, 30 kDa, 22 kDa, 19 kDa, 18 kDa and 7 kDa totalling more than 500 kDa in mass. The same holoenzyme, with the addition of the transcription-specificity factor RAP94, is used for early gene expression.

The protein resides in the virion. It carries out the reaction RNA(n) + a ribonucleoside 5'-triphosphate = RNA(n+1) + diphosphate. In terms of biological role, part of the DNA-dependent RNA polymerase which catalyzes the transcription of viral DNA into RNA using the four ribonucleoside triphosphates as substrates. Responsible for the transcription of early, intermediate and late genes. DNA-dependent RNA polymerase associates with the early transcription factor (ETF) thereby allowing the early genes transcription. Late transcription, and probably also intermediate transcription, require newly synthesized RNA polymerase. The protein is DNA-directed RNA polymerase 7 kDa subunit (RPO7) of Fowlpox virus (strain NVSL) (FPV).